The following is a 109-amino-acid chain: ATP-dependent Clp protease adapter protein ClpS 2 (109 aa).

Positions 1–24 (MAGDGGRSGPSTPSTSVITKTKPR) are disordered.

Belongs to the ClpS family. In terms of assembly, binds to the N-terminal domain of the chaperone ClpA.

Involved in the modulation of the specificity of the ClpAP-mediated ATP-dependent protein degradation. This is ATP-dependent Clp protease adapter protein ClpS 2 from Rhodopseudomonas palustris (strain ATCC BAA-98 / CGA009).